Reading from the N-terminus, the 199-residue chain is GTP-binding protein Di-Ras2 (199 aa).

GTP contacts are provided by residues Gly-14 to Ser-21, Arg-33 to Thr-39, Asp-61 to Ser-65, and Asn-121 to Asp-124. Ser-35 is subject to Phosphoserine. Residues Tyr-36–Tyr-44 carry the Effector region motif. The residue at position 126 (Ser-126) is a Phosphoserine. Ala-152 to Lys-153 lines the GTP pocket. Cys-196 carries the post-translational modification Cysteine methyl ester. Cys-196 carries S-geranylgeranyl cysteine lipidation. The propeptide at Val-197 to Met-199 is removed in mature form.

This sequence belongs to the small GTPase superfamily. Di-Ras family. Post-translationally, ubiquitinated by the ECS(ASB11) complex via 'Lys-11'-linked ubiquitin chains, leading to its degradation by the proteasome.

The protein localises to the cell membrane. It catalyses the reaction GTP + H2O = GDP + phosphate + H(+). Functionally, displays low GTPase activity and exists predominantly in the GTP-bound form. The sequence is that of GTP-binding protein Di-Ras2 (DIRAS2) from Macaca fascicularis (Crab-eating macaque).